The following is a 672-amino-acid chain: Cytadherence high molecular weight protein 3 (672 aa).

25 repeat units span residues 98–100, 106–108, 160–162, 197–199, 206–208, 211–213, 221–223, 226–228, 235–237, 249–251, 288–290, 310–319, 312–315, 316–318, 322–324, 330–339, 332–335, 336–338, 354–358, 385–389, 396–400, 402–404, 413–415, 424–428, and 454–456. The 9 X 3 AA repeats OF Y-D-Q stretch occupies residues 98–251; sequence YDQVNNTFYD…NAYNTQNYDQ (154 aa). Residues 160 to 456 form an 8 X 3 AA repeats of P-V-V region; it reads PVVDPDATPE…QTTPAVPPVV (297 aa). A disordered region spans residues 177-197; that stretch reads GLDPLPQAPDEYQDTTAPPAY. A 2 X 10 AA repeats of V-E-P-T-P-T-P-V-V-E region spans residues 310 to 339; the sequence is VEPTPTPVVETAPVVEAPKVVEPTPTPVVE. A 6 X 5 AA repeats of P-X-P-X-P region spans residues 312–428; sequence PTPTPVVETA…PKVVTPTPAP (117 aa).

The protein localises to the cell projection. It is found in the attachment organelle membrane. Its function is as follows. Component of the cytoskeleton-like structure which stabilizes the shape of the wall-less mycoplasma. This cytoskeleton-like network of accessory proteins containing HMW proteins 1 to 5 allows the proper anchoring of cytadhesin proteins in the mycoplasmal membrane at the attachment organelle. Essential for successful surface parasitism. The protein is Cytadherence high molecular weight protein 3 (hmw3) of Mycoplasma pneumoniae (strain ATCC 29342 / M129 / Subtype 1) (Mycoplasmoides pneumoniae).